A 381-amino-acid chain; its full sequence is Spermidine/putrescine import ATP-binding protein PotA (381 aa).

One can recognise an ABC transporter domain in the interval 22–252 (VELRNVFKFF…PKTSFVADFI (231 aa)). 54-61 (GPSGCGKT) contributes to the ATP binding site.

It belongs to the ABC transporter superfamily. Spermidine/putrescine importer (TC 3.A.1.11.1) family. As to quaternary structure, the complex is composed of two ATP-binding proteins (PotA), two transmembrane proteins (PotB and PotC) and a solute-binding protein (PotD).

The protein resides in the cell inner membrane. The enzyme catalyses ATP + H2O + polyamine-[polyamine-binding protein]Side 1 = ADP + phosphate + polyamineSide 2 + [polyamine-binding protein]Side 1.. Functionally, part of the ABC transporter complex PotABCD involved in spermidine/putrescine import. Responsible for energy coupling to the transport system. The protein is Spermidine/putrescine import ATP-binding protein PotA of Trichormus variabilis (strain ATCC 29413 / PCC 7937) (Anabaena variabilis).